Here is a 207-residue protein sequence, read N- to C-terminus: Melanocortin-2 receptor accessory protein 2 (207 aa).

A disordered region spans residues 1–21 (MEMSAQRLASNRTSPQSPSNS). A compositionally biased stretch (polar residues) spans 7 to 21 (RLASNRTSPQSPSNS). Residue asparagine 11 is glycosylated (N-linked (GlcNAc...) asparagine). Residues 47 to 67 (IVIGFWVGLAVFVIFMFFVLT) form a helical membrane-spanning segment. At serine 91 the chain carries Phosphoserine.

It belongs to the MRAP family. In terms of assembly, homodimer and heterodimer. Forms antiparallel homodimers and heterodimers with MRAP. Interacts with MC1R, MC2R, MC3R and MC5R. Interacts with MC4R. As to expression, predominantly expressed in the brain, mainly in the pons and cerebellum but also in regions involved in energy homeostasis, such as the hypothalamus and brainstem.

It is found in the cell membrane. It localises to the endoplasmic reticulum membrane. Modulator of melanocortin receptor 4 (MC4R), a receptor involved in energy homeostasis. Plays a central role in the control of energy homeostasis and body weight regulation by increasing ligand-sensitivity of MC4R and MC4R-mediated generation of cAMP. May also act as a negative regulator of MC2R: competes with MRAP for binding to MC2R and impairs the binding of corticotropin (ACTH) to MC2R. May also regulate activity of other melanocortin receptors (MC1R, MC3R and MC5R); however, additional evidence is required in vivo. The protein is Melanocortin-2 receptor accessory protein 2 (Mrap2) of Mus musculus (Mouse).